The primary structure comprises 677 residues: DNA ligase (677 aa).

NAD(+) is bound by residues 34–38 (DAQYD), 84–85 (SL), and glutamate 118. Lysine 120 serves as the catalytic N6-AMP-lysine intermediate. NAD(+)-binding residues include arginine 141, glutamate 176, lysine 283, and lysine 307. The Zn(2+) site is built by cysteine 403, cysteine 406, cysteine 421, and cysteine 427. The BRCT domain maps to 594-677 (ETASPISGKT…DLLKTVSNSE (84 aa)).

It belongs to the NAD-dependent DNA ligase family. LigA subfamily. Mg(2+) serves as cofactor. Mn(2+) is required as a cofactor.

The catalysed reaction is NAD(+) + (deoxyribonucleotide)n-3'-hydroxyl + 5'-phospho-(deoxyribonucleotide)m = (deoxyribonucleotide)n+m + AMP + beta-nicotinamide D-nucleotide.. DNA ligase that catalyzes the formation of phosphodiester linkages between 5'-phosphoryl and 3'-hydroxyl groups in double-stranded DNA using NAD as a coenzyme and as the energy source for the reaction. It is essential for DNA replication and repair of damaged DNA. This chain is DNA ligase, found in Anaplasma phagocytophilum (strain HZ).